Here is a 504-residue protein sequence, read N- to C-terminus: Plasma protease C1 inhibitor (504 aa).

The signal sequence occupies residues 1 to 22; the sequence is MASKLTPLTLLLLLLAGDRAFS. Positions 23-75 are disordered; it reads DSEVTSHSSQDPLVVQEGSRDSVPERDGSRSPIEHTGQSSTWPTTSGSTKISN. Positions 24–33 are enriched in polar residues; that stretch reads SEVTSHSSQD. The span at 40 to 55 shows a compositional bias: basic and acidic residues; the sequence is GSRDSVPERDGSRSPI. Over residues 58–75 the composition is skewed to polar residues; the sequence is TGQSSTWPTTSGSTKISN. N-linked (GlcNAc...) asparagine glycosylation is found at Asn75, Asn83, Asn107, Asn243, and Asn356. The disordered stretch occupies residues 94–132; the sequence is AQLPEDSPSQSPVNSSSPPSTASAPPTQAPTEPLCPEPL. Residues 100 to 125 are compositionally biased toward low complexity; the sequence is SPSQSPVNSSSPPSTASAPPTQAPTE.

It belongs to the serpin family. In terms of assembly, interacts with MASP1.

It localises to the secreted. In terms of biological role, serine protease inhibitor, which acrs as a regulator of the classical complement pathway. Forms a proteolytically inactive stoichiometric complex with the C1r or C1s proteases. May also regulate blood coagulation, fibrinolysis and the generation of kinins. Very efficient inhibitor of FXIIa. Inhibits chymotrypsin and kallikrein. The chain is Plasma protease C1 inhibitor (Serping1) from Rattus norvegicus (Rat).